The primary structure comprises 97 residues: U6-theraphotoxin-Hhn1a 1 (97 aa).

A signal peptide spans 1-33; that stretch reads MLIKQFSRRSKNMKVQILLAFAALFVLAVGSYA. The propeptide occupies 34–61; that stretch reads SESKKLDLRDALFSAMFSADYQLNPQER. Intrachain disulfides connect Cys63-Cys77, Cys70-Cys82, and Cys76-Cys89.

The protein belongs to the neurotoxin 10 (Hwtx-1) family. 12 (Hntx-12) subfamily. As to expression, expressed by the venom gland.

The protein localises to the secreted. Functionally, ion channel inhibitor. This is U6-theraphotoxin-Hhn1a 1 from Cyriopagopus hainanus (Chinese bird spider).